Here is a 316-residue protein sequence, read N- to C-terminus: Protein lifeguard 2 (316 aa).

The interval 1-49 is disordered; it reads MTQGKLSVANKAPGTEGQQQANGEKKDAPAVPSAPPSYEEATSGEGLKA. A run of 3 helical transmembrane segments spans residues 106-126, 138-158, and 165-185; these read VYTILLVQLLVTLAVVALFTF, PGWYWASYAVFFATYLTLACC, and FPWNLILLTIFTLSMAYLTGM. N191 carries N-linked (GlcNAc...) asparagine glycosylation. The next 4 membrane-spanning stretches (helical) occupy residues 194 to 214, 225 to 245, 251 to 271, and 290 to 310; these read SVLLCLGITALVCLSVTIFSF, GVLFVLLMTLFFSGLLLAILL, PWLHAVYAVLGAGVFTLFLAF, and IFGALNIYLDIIYIFTFFLQL.

Belongs to the BI1 family. LFG subfamily. In terms of assembly, interacts with FAS/TNFRSF6 and BAX. In terms of tissue distribution, expressed at high levels on dendrites and to a lesser extent on the soma and axons of neurons in various regions of brain.

Its subcellular location is the cell membrane. It is found in the membrane raft. The protein localises to the postsynaptic cell membrane. Its function is as follows. Antiapoptotic protein which protects cells uniquely from Fas-induced apoptosis. Regulates Fas-mediated apoptosis in neurons by interfering with caspase-8 activation. Plays a role in cerebellar development by affecting cerebellar size, internal granular layer (IGL) thickness, and Purkinje cell (PC) development. This Rattus norvegicus (Rat) protein is Protein lifeguard 2 (Faim2).